Here is a 63-residue protein sequence, read N- to C-terminus: Large ribosomal subunit protein bL32 (63 aa).

This sequence belongs to the bacterial ribosomal protein bL32 family.

The sequence is that of Large ribosomal subunit protein bL32 from Acholeplasma laidlawii.